The primary structure comprises 326 residues: Probable oxidoreductase patJ (326 aa).

The disordered stretch occupies residues 287-326 (HGVQPGSVNGSNGHSTGVESKLEQLGSRAQRRVVIDDAGK). Residues 292-304 (GSVNGSNGHSTGV) show a composition bias toward polar residues.

It belongs to the oxidoreductase OpS7 family.

It localises to the vacuole lumen. Its subcellular location is the cytoplasmic vesicle lumen. It functions in the pathway mycotoxin biosynthesis; patulin biosynthesis. Probable oxidoreductase; part of the gene cluster that mediates the biosynthesis of patulin, an acetate-derived tetraketide mycotoxin produced by several fungal species that shows antimicrobial properties against several bacteria. PatJ acts with patO in the vacuole to convert gentisyl alcohol to isoepoxydon. The pathway begins with the synthesis of 6-methylsalicylic acid by the polyketide synthase (PKS) patK via condensation of acetate and malonate units. The 6-methylsalicylic acid decarboxylase patG then catalyzes the decarboxylation of 6-methylsalicylic acid to yield m-cresol (also known as 3-methylphenol). These first reactions occur in the cytosol. The intermediate m-cresol is then transported into the endoplasmic reticulum where the cytochrome P450 monooxygenase patH converts it to m-hydroxybenzyl alcohol, which is further converted to gentisyl alcohol by the cytochrome P450 monooxygenase patI. The oxidoreductases patJ and patO further convert gentisyl alcohol to isoepoxydon in the vacuole. PatN catalyzes then the transformation of isoepoxydon into phyllostine. The cluster protein patF is responsible for the conversion from phyllostine to neopatulin whereas the alcohol dehydrogenase patD converts neopatulin to E-ascladiol. The steps between isoepoxydon and E-ascladiol occur in the cytosol, and E-ascladiol is probably secreted to the extracellular space by one of the cluster-specific transporters patC or patM. Finally, the secreted patulin synthase patE catalyzes the conversion of E-ascladiol to patulin. In Penicillium expansum (Blue mold rot fungus), this protein is Probable oxidoreductase patJ.